A 428-amino-acid polypeptide reads, in one-letter code: D-amino acid dehydrogenase (428 aa).

Residue 3-17 participates in FAD binding; it reads VVILGSGVVGVASAY.

It belongs to the DadA oxidoreductase family. It depends on FAD as a cofactor.

It catalyses the reaction a D-alpha-amino acid + A + H2O = a 2-oxocarboxylate + AH2 + NH4(+). It functions in the pathway amino-acid degradation; D-alanine degradation; NH(3) and pyruvate from D-alanine: step 1/1. In terms of biological role, oxidative deamination of D-amino acids. The sequence is that of D-amino acid dehydrogenase from Burkholderia pseudomallei (strain K96243).